Reading from the N-terminus, the 479-residue chain is UDP-N-acetylmuramate--L-alanine ligase (479 aa).

Position 114–120 (114–120 (GTHGKTT)) interacts with ATP.

It belongs to the MurCDEF family.

Its subcellular location is the cytoplasm. It catalyses the reaction UDP-N-acetyl-alpha-D-muramate + L-alanine + ATP = UDP-N-acetyl-alpha-D-muramoyl-L-alanine + ADP + phosphate + H(+). The protein operates within cell wall biogenesis; peptidoglycan biosynthesis. In terms of biological role, cell wall formation. This is UDP-N-acetylmuramate--L-alanine ligase from Pelodictyon phaeoclathratiforme (strain DSM 5477 / BU-1).